Here is a 688-residue protein sequence, read N- to C-terminus: Alpha-1,4-glucan:maltose-1-phosphate maltosyltransferase (688 aa).

Lys-289, Gln-349, and Asp-384 together coordinate alpha-maltose 1-phosphate. The active-site Nucleophile is Asp-420. Asn-421 contributes to the alpha-maltose 1-phosphate binding site. Residue Glu-449 is the Proton donor of the active site. Lys-560–Tyr-561 lines the alpha-maltose 1-phosphate pocket.

The protein belongs to the glycosyl hydrolase 13 family. GlgE subfamily. In terms of assembly, homodimer.

It carries out the reaction alpha-maltose 1-phosphate + [(1-&gt;4)-alpha-D-glucosyl](n) = [(1-&gt;4)-alpha-D-glucosyl](n+2) + phosphate. Its function is as follows. Maltosyltransferase that uses maltose 1-phosphate (M1P) as the sugar donor to elongate linear or branched alpha-(1-&gt;4)-glucans. Is involved in a branched alpha-glucan biosynthetic pathway from trehalose, together with TreS, Mak and GlgB. This is Alpha-1,4-glucan:maltose-1-phosphate maltosyltransferase from Rhodospirillum rubrum (strain ATCC 11170 / ATH 1.1.1 / DSM 467 / LMG 4362 / NCIMB 8255 / S1).